The chain runs to 50 residues: Photosystem I reaction center subunit IX (50 aa).

Residues 7–27 (YLSTAPVLAILCCSFLAGLVI) traverse the membrane as a helical segment.

This sequence belongs to the PsaJ family.

The protein localises to the plastid. Its subcellular location is the chloroplast thylakoid membrane. Functionally, may help in the organization of the PsaE and PsaF subunits. This is Photosystem I reaction center subunit IX from Pinus koraiensis (Korean pine).